A 212-amino-acid chain; its full sequence is 2-hydroxychromene-2-carboxylate isomerase (212 aa).

Serine 24 serves as the catalytic Nucleophile. Serine 24 is a binding site for glutathione. Residues lysine 56, 66–67, and tyrosine 97 contribute to the substrate site; that span reads NR. Glutathione contacts are provided by residues valine 181 and 192–195; that span reads WGND.

It belongs to the GST superfamily. NadH family. Glutathione serves as cofactor.

The catalysed reaction is 2-hydroxychromene-2-carboxylate = (3E)-4-(2-hydroxyphenyl)-2-oxobut-3-enoate. It functions in the pathway aromatic compound metabolism; naphthalene degradation. In terms of biological role, involved in the naphthalene catabolic pathway. Catalyzes the reversible glutathione-dependent isomerization of 2-hydroxychromene-2-carboxylate (HCCA) to trans-O-hydroxybenzylidenepyruvate (THBPA). The protein is 2-hydroxychromene-2-carboxylate isomerase (doxJ) of Pseudomonas sp. (strain C18).